A 182-amino-acid chain; its full sequence is Guanylate kinase (182 aa).

A Guanylate kinase-like domain is found at 2–180; sequence GTLTVITGPS…ALLKLEGLMG (179 aa). An ATP-binding site is contributed by 9–16; sequence GPSGVGKG.

This sequence belongs to the guanylate kinase family.

The protein resides in the cytoplasm. The enzyme catalyses GMP + ATP = GDP + ADP. The catalysed reaction is dZMP + ATP = dZDP + ADP. The protein operates within purine metabolism. Its function is as follows. Essential for recycling GMP and indirectly, cGMP. Functionally, (Microbial infection) Catalyzes the phosphorylation of dZMP to dZDP, when the bacterium is infected by a phage that produces the substrate for the synthesis of dZTP (2- amino-2'-deoxyadenosine 5'-triphosphate), which is then used by the phage as a DNA polymerase substrate. This chain is Guanylate kinase, found in Parasynechococcus marenigrum (strain WH8102).